The primary structure comprises 200 residues: Pre-mRNA cleavage factor Im 25 kDa subunit 2 (200 aa).

Residues 45–172 form the Nudix hydrolase domain; it reads GMRTSVEGIL…KLLAVPLFEL (128 aa). Residues 72–74 form an interaction with RNA region; it reads TFC. The short motif at 79 to 100 is the Nudix box element; that stretch reads GRLKPGENEADGLKRKLTSKLG.

It belongs to the Nudix hydrolase family. CPSF5 subfamily. In terms of assembly, homodimer. Component of the cleavage factor Im (CFIm) complex. Forms a complex with cleavage and polyadenylation specificity factor (CPSF) subunits FIPS5, PAPS4 and CPSF30.

The protein localises to the nucleus. Component of the cleavage factor Im (CFIm) complex that plays a key role in pre-mRNA 3'-processing. Involved in association with CPSF6 or CPSF7 in pre-MRNA 3'-end poly(A) site cleavage and poly(A) addition. NUDT21/CPSF5 binds to cleavage and polyadenylation RNA substrates. The homodimer mediates simultaneous sequence-specific recognition of two 5'-UGUA-3' elements within the pre-mRNA. Binds to, but does not hydrolyze mono- and di-adenosine nucleotides. May have a role in mRNA export. This Arabidopsis thaliana (Mouse-ear cress) protein is Pre-mRNA cleavage factor Im 25 kDa subunit 2.